The following is a 462-amino-acid chain: MDNGMFSGFIMIKNLLLFCISMNLSSHFGFSQMPTSSVKDETNDNITIFTRILDGLLDGYDNRLRPGLGERITQVRTDIYVTSFGPVSDTEMEYTIDVFFRQSWKDERLRFKGPMQRLPLNNLLASKIWTPDTFFHNGKKSIAHNMTTPNKLLRLEDDGTLLYTMRLTISAECPMQLEDFPMDAHACPLKFGSYAYPNSEVVYVWTNGSTKSVVVAEDGSRLNQYHLMGQTVGTENISTSTGEYTIMTAHFHLKRKIGYFVIQTYLPCIMTVILSQVSFWLNRESVPARTVFGVTTVLTMTTLSISARNSLPKVAYATAMDWFIAVCYAFVFSALIEFATVNYFTKRGWAWDGKKALEAAKIKKKREVILNKSTNAFTTGKMSHPPNIPKEQTPAGTSNTTSVSVKPSEEKTSESKKTYNSISKIDKMSRIVFPVLFGTFNLVYWATYLNREPVIKGAASPK.

The signal sequence occupies residues 1 to 31 (MDNGMFSGFIMIKNLLLFCISMNLSSHFGFS). Residues 32–260 (QMPTSSVKDE…FHLKRKIGYF (229 aa)) are Extracellular-facing. N-linked (GlcNAc...) asparagine glycosylation is present at Asn-45. Arg-101 is a 4-aminobutanoate binding site. The N-linked (GlcNAc...) asparagine glycan is linked to Asn-145. Residue Thr-164 coordinates 4-aminobutanoate. Cys-173 and Cys-187 form a disulfide bridge. Residues Asn-207 and Asn-236 are each glycosylated (N-linked (GlcNAc...) asparagine). A helical membrane pass occupies residues 261–281 (VIQTYLPCIMTVILSQVSFWL). Residues 282-286 (NRESV) are Cytoplasmic-facing. A helical transmembrane segment spans residues 287 to 308 (PARTVFGVTTVLTMTTLSISAR). Over 309–318 (NSLPKVAYAT) the chain is Extracellular. The chain crosses the membrane as a helical span at residues 319 to 340 (AMDWFIAVCYAFVFSALIEFAT). Residues 341–427 (VNYFTKRGWA…TYNSISKIDK (87 aa)) are Cytoplasmic-facing. Residue Lys-355 forms a Glycyl lysine isopeptide (Lys-Gly) (interchain with G-Cter in ubiquitin) linkage. The interval 377 to 412 (FTTGKMSHPPNIPKEQTPAGTSNTTSVSVKPSEEKT) is disordered. The chain crosses the membrane as a helical span at residues 428–448 (MSRIVFPVLFGTFNLVYWATY). Over 449 to 462 (LNREPVIKGAASPK) the chain is Extracellular.

The protein belongs to the ligand-gated ion channel (TC 1.A.9) family. Gamma-aminobutyric acid receptor (TC 1.A.9.5) subfamily. GABRA5 sub-subfamily. In terms of assembly, heteropentamer, formed by a combination of alpha (GABRA1-6), beta (GABRB1-3), gamma (GABRG1-3), delta (GABRD), epsilon (GABRE), rho (GABRR1-3), pi (GABRP) and theta (GABRQ) chains, each subunit exhibiting distinct physiological and pharmacological properties.

Its subcellular location is the postsynaptic cell membrane. It is found in the cell membrane. The catalysed reaction is chloride(in) = chloride(out). Alpha subunit of the heteropentameric ligand-gated chloride channel gated by gamma-aminobutyric acid (GABA), a major inhibitory neurotransmitter in the brain. GABA-gated chloride channels, also named GABA(A) receptors (GABAAR), consist of five subunits arranged around a central pore and contain GABA active binding site(s) located at the alpha and beta subunit interface(s). When activated by GABA, GABAARs selectively allow the flow of chloride anions across the cell membrane down their electrochemical gradient. GABAARs containing alpha-5/GABRA5 subunits are mainly extrasynaptic and contribute to the tonic GABAergic inhibition in the hippocampus. Extrasynaptic alpha-5-containing GABAARs in CA1 pyramidal neurons play a role in learning and memory processes. The polypeptide is Gamma-aminobutyric acid receptor subunit alpha-5 (Homo sapiens (Human)).